The sequence spans 488 residues: Diacylglycerol O-acyltransferase 1 (488 aa).

The interval 1–57 (MGDRGSSRRRRTGSRPSSHGGGGPAAAEEEVRDAAAGPDVGAAGDAPAPAPNKDGDA) is disordered. At 1-83 (MGDRGSSRRR…SLFSSDSGFS (83 aa)) the chain is on the cytoplasmic side. Residues 1–91 (MGDRGSSRRR…FSNYRGILNW (91 aa)) are involved in homomerization. Ser17 and Ser18 each carry phosphoserine. Low complexity predominate over residues 34–47 (AAAGPDVGAAGDAP). Residues 84 to 118 (NYRGILNWCVVMLILSNARLFLENLIKYGILVDPI) form a helical membrane-spanning segment. Over 119–130 (QVVSLFLKDPYS) the chain is Lumenal. An extracellular loop 1 (EL1) region spans residues 119-130 (QVVSLFLKDPYS). A helical transmembrane segment spans residues 131–156 (WPAPCLVIAANVFAVAAFQVEKRLAV). Positions 131–488 (WPAPCLVIAA…LNYEAPAAEA (358 aa)) are MBOAT fold. Topologically, residues 157–161 (GALTE) are cytoplasmic. A helical transmembrane segment spans residues 162–184 (QAGLLLHVANLATILCFPAAVVL). The Lumenal segment spans residues 185–191 (LVESITP). Residues 192–223 (VGSLLALMAHTILFLKLFSYRDVNSWCRRARA) form a helical membrane-spanning segment. At 224–273 (KAASAGKKASSAAAPHTVSYPDNLTYRDLYYFLFAPTLCYELNFPRSPRI) the chain is on the cytoplasmic side. An intracellular loop 1 (IL1) region spans residues 224 to 276 (KAASAGKKASSAAAPHTVSYPDNLTYRDLYYFLFAPTLCYELNFPRSPRIRKR). The helical transmembrane segment at 274-308 (RKRFLLRRILEMLFFTQLQVGLIQQWMVPTIQNSM) threads the bilayer. The Lumenal portion of the chain corresponds to 309 to 315 (KPFKDMD). The helical transmembrane segment at 316 to 353 (YSRIIERLLKLAVPNHLIWLIFFYWLFHSCLNAVAELM) threads the bilayer. Residues 354–399 (QFGDREFYRDWWNSESVTYFWQNWNIPVHKWCIRHFYKPMLRRGSS) are Cytoplasmic-facing. The tract at residues 354-399 (QFGDREFYRDWWNSESVTYFWQNWNIPVHKWCIRHFYKPMLRRGSS) is intracellular loop 2 (IL2). Residues 360-366 (FYRDWWN) carry the FYXDWWN motif motif. An acyl-CoA contacts are provided by residues 374–382 (WQNWNIPVH), Tyr390, and Arg404. The segment at 380–394 (PVHKWCIRHFYKPML) is amphipathic helix (AH). Residues 400 to 420 (KWMARTGVFLASAFFHEYLVS) traverse the membrane as a helical segment. Residue His415 is part of the active site. At 421–428 (VPLRMFRL) the chain is on the lumenal side. The helical transmembrane segment at 429–447 (WAFTGMMAQIPLAWFVGRF) threads the bilayer. Residues 448 to 449 (FQ) lie on the Cytoplasmic side of the membrane. Residues 450 to 481 (GNYGNAAVWLSLIIGQPIAVLMYVHDYYVLNY) form a helical membrane-spanning segment. Tyr477 serves as a coordination point for an acyl-CoA. The Lumenal segment spans residues 482–488 (EAPAAEA).

This sequence belongs to the membrane-bound acyltransferase family. Sterol o-acyltransferase subfamily. In terms of assembly, homodimer or homotetramer; both forms have similar enzymatic activities.

Its subcellular location is the endoplasmic reticulum membrane. It catalyses the reaction an acyl-CoA + a 1,2-diacyl-sn-glycerol = a triacyl-sn-glycerol + CoA. The catalysed reaction is all-trans-retinol + an acyl-CoA = an all-trans-retinyl ester + CoA. It carries out the reaction 2-(9Z-octadecenoyl)-glycerol + (9Z)-octadecenoyl-CoA = 1,2-di-(9Z-octadecenoyl)-sn-glycerol + CoA. The enzyme catalyses 1,2-di-(9Z-octadecenoyl)-sn-glycerol + (9Z)-octadecenoyl-CoA = 1,2,3-tri-(9Z-octadecenoyl)-glycerol + CoA. It catalyses the reaction all-trans-retinol + hexadecanoyl-CoA = all-trans-retinyl hexadecanoate + CoA. The catalysed reaction is 1-O-(9Z-octadecenyl)-glycerol + (9Z)-octadecenoyl-CoA = 1-O-(9Z-octadecyl)-3-(9Z-octadecenoyl)-glycerol + CoA. It carries out the reaction 1-O-(9Z-octadecyl)-3-(9Z-octadecenoyl)-glycerol + (9Z)-octadecenoyl-CoA = 1-O-(9Z-octadecenyl)-2,3-di-(9Z-octadecenoyl)glycerol + CoA. The enzyme catalyses 1-(9Z-octadecenoyl)-glycerol + (9Z)-octadecenoyl-CoA = 1,2-di-(9Z-octadecenoyl)-glycerol + CoA. It catalyses the reaction 1,2-di-(9Z-octadecenoyl)-glycerol + (9Z)-octadecenoate + H(+) = 1,2,3-tri-(9Z-octadecenoyl)-glycerol + H2O. The catalysed reaction is 1-octadecanoyl-2-(5Z,8Z,11Z,14Z-eicosatetraenoyl)-sn-glycerol + (9Z)-octadecenoyl-CoA = 1-octadecanoyl-2-(5Z,8Z,11Z,14Z)-eicosatetraenoyl-3-(9Z)-octadecenoyl-sn-glycerol + CoA. It carries out the reaction hexadecane-1,2-diol + 2 hexadecanoyl-CoA = 1,2-O,O-dihexadecanoyl-1,2-hexadecanediol + 2 CoA. The enzyme catalyses hexadecane-1,2-diol + hexadecanoyl-CoA = 2-hydroxyhexadecyl hexadecanoate + CoA. It catalyses the reaction 2-(9Z-octadecenoyl)-glycerol + hexadecanoyl-CoA = 1-hexadecanoyl-2-(9Z-octadecenoyl)-sn-glycerol + CoA. The catalysed reaction is 1,2-di-(9Z-octadecenoyl)-sn-glycerol + hexadecanoyl-CoA = 1,2-di-(9Z)-octadecenoyl-3-hexadecanoyl-sn-glycerol + CoA. It carries out the reaction hexadecan-1-ol + hexadecanoyl-CoA = hexadecanyl hexadecanoate + CoA. The enzyme catalyses 13-cis-retinol + hexadecanoyl-CoA = 13-cis-retinyl hexadecanoate + CoA. It catalyses the reaction 1,3-di-(9Z-octadecenoyl)-glycerol + (9Z)-octadecenoyl-CoA = 1,2,3-tri-(9Z-octadecenoyl)-glycerol + CoA. The catalysed reaction is 2,3-di-(9Z)-octadecenoyl-sn-glycerol + (9Z)-octadecenoyl-CoA = 1,2,3-tri-(9Z-octadecenoyl)-glycerol + CoA. Its pathway is lipid metabolism; glycerolipid metabolism. XP620 is a selective DGAT1 inhibitor. Its function is as follows. Catalyzes the terminal and only committed step in triacylglycerol synthesis by using diacylglycerol and fatty acyl CoA as substrates. Highly expressed in epithelial cells of the small intestine and its activity is essential for the absorption of dietary fats. In liver, plays a role in esterifying exogenous fatty acids to glycerol, and is required to synthesize fat for storage. Also present in female mammary glands, where it produces fat in the milk. May be involved in VLDL (very low density lipoprotein) assembly. In contrast to DGAT2 it is not essential for survival. Functions as the major acyl-CoA retinol acyltransferase (ARAT) in the skin, where it acts to maintain retinoid homeostasis and prevent retinoid toxicity leading to skin and hair disorders. Exhibits additional acyltransferase activities, includin acyl CoA:monoacylglycerol acyltransferase (MGAT), wax monoester and wax diester synthases. Also able to use 1-monoalkylglycerol (1-MAkG) as an acyl acceptor for the synthesis of monoalkyl-monoacylglycerol (MAMAG). The protein is Diacylglycerol O-acyltransferase 1 of Homo sapiens (Human).